The chain runs to 348 residues: MTIRVGIAGATGYTGVELVRLLAQHPEAEVVVAGTESYQGQHLAAVYPHLRERVDLVGREASPEALAGCDVVFTSLPHGLTMALAPAVLAAGGRLIDLGADFRLRDVTAYEQWYRKTHTAPDLMEEAVYGLPELYRERIRGARLVGNPGCYPTACALAAAPLLQAGVVETEGIIFDAKSGVSGAGRGVNLGVHFSEVNENFKAYNIAGTHRHTPEIEQTLSDLAGRPVVVSFTPHLVPMTRGILATGYFTLKAERTTEQLVDLFREFYAGEPFVRVRPAGELPTTKQVWGSNYCDIGLQVDPRTRRVLVISVIDNLVKGAAGQAIQNMNLLFGLPETTGLLNAGPVYP.

C150 is a catalytic residue.

This sequence belongs to the NAGSA dehydrogenase family. Type 1 subfamily.

The protein resides in the cytoplasm. The catalysed reaction is N-acetyl-L-glutamate 5-semialdehyde + phosphate + NADP(+) = N-acetyl-L-glutamyl 5-phosphate + NADPH + H(+). Its pathway is amino-acid biosynthesis; L-arginine biosynthesis; N(2)-acetyl-L-ornithine from L-glutamate: step 3/4. Functionally, catalyzes the NADPH-dependent reduction of N-acetyl-5-glutamyl phosphate to yield N-acetyl-L-glutamate 5-semialdehyde. The sequence is that of N-acetyl-gamma-glutamyl-phosphate reductase from Symbiobacterium thermophilum (strain DSM 24528 / JCM 14929 / IAM 14863 / T).